A 353-amino-acid polypeptide reads, in one-letter code: (-)-beta-caryophyllene synthase ((2E,6E)-farnesyl diphosphate cyclizing) (353 aa).

Mg(2+) contacts are provided by Asp-85 and Asp-89. The DDXXD motif signature appears at 85–89 (DDQFD). A substrate-binding site is contributed by Arg-179. The Mg(2+) site is built by Asn-225 and Ser-229. Lys-232 is a substrate binding site. Glu-233 is a binding site for Mg(2+). 320–321 (RF) is a substrate binding site.

The protein belongs to the terpene synthase family. It depends on Mg(2+) as a cofactor.

The catalysed reaction is (2E,6E)-farnesyl diphosphate = (-)-(E)-beta-caryophyllene + diphosphate. Its pathway is secondary metabolite biosynthesis; terpenoid biosynthesis. Functionally, catalyzes the conversion of (2E,6E)-farnesyl diphosphate (FPP) to yield the bicyclic sesquiterpene (2S,10R)-(-)-(E)-beta-caryophyllene via a probable 1,10-cyclization, which could involve the abstraction of the pyrophosphate from FPP to yield a (E,E)-germacradienyl cation. The polypeptide is (-)-beta-caryophyllene synthase ((2E,6E)-farnesyl diphosphate cyclizing) (ptlA) (Saccharothrix espanaensis (strain ATCC 51144 / DSM 44229 / JCM 9112 / NBRC 15066 / NRRL 15764)).